A 389-amino-acid chain; its full sequence is Probable dual-specificity RNA methyltransferase RlmN (389 aa).

E114 functions as the Proton acceptor in the catalytic mechanism. The region spanning 120 to 358 is the Radical SAM core domain; sequence QHYGLSVCVT…CVVRQEHGTD (239 aa). An intrachain disulfide couples C127 to C363. [4Fe-4S] cluster is bound by residues C134, C138, and C141. S-adenosyl-L-methionine is bound by residues 186-187, S218, 241-243, and N319; these read GE and SLH. C363 (S-methylcysteine intermediate) is an active-site residue. The disordered stretch occupies residues 370–389; the sequence is TMKRDRQKAVAEASGKSEGK. Positions 371–389 are enriched in basic and acidic residues; it reads MKRDRQKAVAEASGKSEGK.

It belongs to the radical SAM superfamily. RlmN family. Requires [4Fe-4S] cluster as cofactor.

The protein resides in the cytoplasm. The enzyme catalyses adenosine(2503) in 23S rRNA + 2 reduced [2Fe-2S]-[ferredoxin] + 2 S-adenosyl-L-methionine = 2-methyladenosine(2503) in 23S rRNA + 5'-deoxyadenosine + L-methionine + 2 oxidized [2Fe-2S]-[ferredoxin] + S-adenosyl-L-homocysteine. It carries out the reaction adenosine(37) in tRNA + 2 reduced [2Fe-2S]-[ferredoxin] + 2 S-adenosyl-L-methionine = 2-methyladenosine(37) in tRNA + 5'-deoxyadenosine + L-methionine + 2 oxidized [2Fe-2S]-[ferredoxin] + S-adenosyl-L-homocysteine. Its function is as follows. Specifically methylates position 2 of adenine 2503 in 23S rRNA and position 2 of adenine 37 in tRNAs. This chain is Probable dual-specificity RNA methyltransferase RlmN, found in Streptococcus thermophilus (strain CNRZ 1066).